Consider the following 357-residue polypeptide: UDP-N-acetylglucosamine--N-acetylmuramyl-(pentapeptide) pyrophosphoryl-undecaprenol N-acetylglucosamine transferase (357 aa).

UDP-N-acetyl-alpha-D-glucosamine-binding positions include 13–15 (SAG), Arg-166, Ser-197, and Gln-292.

It belongs to the glycosyltransferase 28 family. MurG subfamily.

The protein localises to the cell membrane. It catalyses the reaction di-trans,octa-cis-undecaprenyl diphospho-N-acetyl-alpha-D-muramoyl-L-alanyl-D-glutamyl-meso-2,6-diaminopimeloyl-D-alanyl-D-alanine + UDP-N-acetyl-alpha-D-glucosamine = di-trans,octa-cis-undecaprenyl diphospho-[N-acetyl-alpha-D-glucosaminyl-(1-&gt;4)]-N-acetyl-alpha-D-muramoyl-L-alanyl-D-glutamyl-meso-2,6-diaminopimeloyl-D-alanyl-D-alanine + UDP + H(+). Its pathway is cell wall biogenesis; peptidoglycan biosynthesis. Cell wall formation. Catalyzes the transfer of a GlcNAc subunit on undecaprenyl-pyrophosphoryl-MurNAc-pentapeptide (lipid intermediate I) to form undecaprenyl-pyrophosphoryl-MurNAc-(pentapeptide)GlcNAc (lipid intermediate II). The sequence is that of UDP-N-acetylglucosamine--N-acetylmuramyl-(pentapeptide) pyrophosphoryl-undecaprenol N-acetylglucosamine transferase from Clostridium novyi (strain NT).